Here is a 105-residue protein sequence, read N- to C-terminus: U2-lycotoxin-Ls1b (105 aa).

A signal peptide spans 1 to 17; sequence MIKYVLISALLVVAVYS. Residues 18-41 constitute a propeptide that is removed on maturation; that stretch reads FTIEDNEDALLEEAEDELDTEEER. 4 cysteine pairs are disulfide-bonded: Cys-51-Cys-67, Cys-58-Cys-97, Cys-60-Cys-83, and Cys-69-Cys-81.

This sequence belongs to the neurotoxin 04 (omega-agtx) family. 01 (type I omega-agtx) subfamily. As to expression, expressed by the venom gland.

The protein resides in the secreted. Functionally, insecticidal to house crickets. It induces an excitatory slow-onset impact that leads to irreversible spastic paralysis. It also modifies human voltage-gated potassium channel Kv1.5/KCNA5. Most likely, it binds to the voltage-sensing domain of the channel, suggesting it does not block the pore but prevents its opening at physiological membrane potentials. The recombinant peptide binds to the channel in an irreversible manner and slows down the hKv1.5 current activation kinetics. It is not toxic to mice, when intracranially injected (at 0.5 ug/g mouse). This chain is U2-lycotoxin-Ls1b, found in Lycosa singoriensis (Wolf spider).